We begin with the raw amino-acid sequence, 277 residues long: Glucose-6-phosphatase catalytic subunit 1 (277 aa).

Arginine 4 lines the substrate pocket. The next 2 membrane-spanning stretches (helical) occupy residues 39–59 (GHAM…LSIA) and 67–87 (LLYR…ELVV). Histidine 40 serves as the catalytic Proton donor. Arginine 91 lines the substrate pocket. Histidine 97 acts as the Nucleophile in catalysis. A run of 3 helical transmembrane segments spans residues 131–151 (FLIT…LKAL), 215–235 (IGCI…TFSP), and 250–270 (AVAL…IYPV). A Prevents secretion from ER motif is present at residues 274-277 (GKNL).

This sequence belongs to the glucose-6-phosphatase family.

It localises to the endoplasmic reticulum membrane. It carries out the reaction D-glucose 6-phosphate + H2O = D-glucose + phosphate. It participates in carbohydrate biosynthesis; gluconeogenesis. Its function is as follows. Hydrolyzes glucose-6-phosphate to glucose in the endoplasmic reticulum. Forms with the glucose-6-phosphate transporter (SLC37A4/G6PT) the complex responsible for glucose production in the terminal step of glycogenolysis and gluconeogenesis. Hence, it is the key enzyme in homeostatic regulation of blood glucose levels. The chain is Glucose-6-phosphatase catalytic subunit 1 (g6pc1) from Haplochromis xenognathus (Lake Victoria cichlid).